A 265-amino-acid polypeptide reads, in one-letter code: Mycothiol acetyltransferase (265 aa).

N-acetyltransferase domains are found at residues 1 to 110 (MDDL…PPLP) and 118 to 265 (VSVR…YVRG). A 1D-myo-inositol 2-(L-cysteinylamino)-2-deoxy-alpha-D-glucopyranoside-binding site is contributed by D3. 44-46 (VQV) contacts acetyl-CoA. The 1D-myo-inositol 2-(L-cysteinylamino)-2-deoxy-alpha-D-glucopyranoside site is built by E145, R185, and E198. Acetyl-CoA-binding positions include 202–204 (LGV) and 209–215 (HCKGLGK). A 1D-myo-inositol 2-(L-cysteinylamino)-2-deoxy-alpha-D-glucopyranoside-binding site is contributed by Y236.

Belongs to the acetyltransferase family. MshD subfamily. In terms of assembly, monomer.

It carries out the reaction 1D-myo-inositol 2-(L-cysteinylamino)-2-deoxy-alpha-D-glucopyranoside + acetyl-CoA = mycothiol + CoA + H(+). Its function is as follows. Catalyzes the transfer of acetyl from acetyl-CoA to desacetylmycothiol (Cys-GlcN-Ins) to form mycothiol. The protein is Mycothiol acetyltransferase of Segniliparus rotundus (strain ATCC BAA-972 / CDC 1076 / CIP 108378 / DSM 44985 / JCM 13578).